The following is a 528-amino-acid chain: DEAD-box ATP-dependent RNA helicase CshA (528 aa).

A Q motif motif is present at residues 2-30 (TTFRELGLSDSLLQSVESMGFEEATPIQA). The Helicase ATP-binding domain occupies 33–203 (IPHALQGKDI…ERFMTEPQHI (171 aa)). 46-53 (AQTGTGKT) contacts ATP. A DEAD box motif is present at residues 151-154 (DEAD). Residues 214-374 (NIQQFYLEVQ…RMDAPTLDEA (161 aa)) enclose the Helicase C-terminal domain. Positions 428–528 (TTPIALTSEP…RKHHSRKPQA (101 aa)) are disordered. Residues 458–506 (DGNRNRSRDGRGGDGRNRDRNRDGRNRDGNRDRNREGSRDGNRGRRGEG) are compositionally biased toward basic and acidic residues. Residues 518 to 528 (ERKHHSRKPQA) show a composition bias toward basic residues.

Belongs to the DEAD box helicase family. CshA subfamily. As to quaternary structure, oligomerizes, may be a member of the RNA degradosome.

The protein resides in the cytoplasm. The enzyme catalyses ATP + H2O = ADP + phosphate + H(+). DEAD-box RNA helicase possibly involved in RNA degradation. Unwinds dsRNA in both 5'- and 3'-directions, has RNA-dependent ATPase activity. This is DEAD-box ATP-dependent RNA helicase CshA from Bacillus thuringiensis (strain Al Hakam).